A 468-amino-acid chain; its full sequence is 3-isopropylmalate dehydratase large subunit (468 aa).

Residues cysteine 347, cysteine 407, and cysteine 410 each contribute to the [4Fe-4S] cluster site.

This sequence belongs to the aconitase/IPM isomerase family. LeuC type 1 subfamily. As to quaternary structure, heterodimer of LeuC and LeuD. It depends on [4Fe-4S] cluster as a cofactor.

The catalysed reaction is (2R,3S)-3-isopropylmalate = (2S)-2-isopropylmalate. The protein operates within amino-acid biosynthesis; L-leucine biosynthesis; L-leucine from 3-methyl-2-oxobutanoate: step 2/4. In terms of biological role, catalyzes the isomerization between 2-isopropylmalate and 3-isopropylmalate, via the formation of 2-isopropylmaleate. In Rippkaea orientalis (strain PCC 8801 / RF-1) (Cyanothece sp. (strain PCC 8801)), this protein is 3-isopropylmalate dehydratase large subunit.